Consider the following 165-residue polypeptide: Crossover junction endodeoxyribonuclease RuvC (165 aa).

Active-site residues include D7, E68, and H142. Positions 7, 68, and 142 each coordinate Mg(2+).

It belongs to the RuvC family. In terms of assembly, homodimer which binds Holliday junction (HJ) DNA. The HJ becomes 2-fold symmetrical on binding to RuvC with unstacked arms; it has a different conformation from HJ DNA in complex with RuvA. In the full resolvosome a probable DNA-RuvA(4)-RuvB(12)-RuvC(2) complex forms which resolves the HJ. Mg(2+) serves as cofactor.

Its subcellular location is the cytoplasm. It catalyses the reaction Endonucleolytic cleavage at a junction such as a reciprocal single-stranded crossover between two homologous DNA duplexes (Holliday junction).. In terms of biological role, the RuvA-RuvB-RuvC complex processes Holliday junction (HJ) DNA during genetic recombination and DNA repair. Endonuclease that resolves HJ intermediates. Cleaves cruciform DNA by making single-stranded nicks across the HJ at symmetrical positions within the homologous arms, yielding a 5'-phosphate and a 3'-hydroxyl group; requires a central core of homology in the junction. The consensus cleavage sequence is 5'-(A/T)TT(C/G)-3'. Cleavage occurs on the 3'-side of the TT dinucleotide at the point of strand exchange. HJ branch migration catalyzed by RuvA-RuvB allows RuvC to scan DNA until it finds its consensus sequence, where it cleaves and resolves the cruciform DNA. The protein is Crossover junction endodeoxyribonuclease RuvC of Anaplasma marginale (strain St. Maries).